The primary structure comprises 214 residues: Clavatol biosynthesis cluster protein B (214 aa).

The N-terminal stretch at 1–17 (MAALSFQCLCVASAVRA) is a signal peptide. 2 N-linked (GlcNAc...) asparagine glycosylation sites follow: Asn103 and Asn204.

Its pathway is secondary metabolite biosynthesis. Part of the cla gene cluster that produces clavatol and ortho-quinone methide. The clavatol biosynthesis cluster cla and the terrestric acid cluster tra are both involved in the production of peniphenones and penilactones. The non-reducing PKS claF is responsible for the formation of clavatol from successive condensations of 3 malonyl-CoA units, presumably with a simple acetyl-CoA starter unit, and 2 methylation steps. The esterase claE probably collaborates with claF by catalyzing the hydrolysis of ACP-bound acyl intermediates to free the ACP from stalled intermediates. The clavatol oxidase claD then converts clavatol to hydroxyclavatol. Spontaneous dehydration of hydroxyclavatol leads to the accumulation of the highly active ortho-quinone methide. On the other hand, the PKS-NRPS hybrid traA is involved in the formation of crustosic acid, with the help of traB and traD. The polyketide synthase module (PKS) of traA is responsible for the synthesis of the polyketide backbone via the condensation of an acetyl-CoA starter unit with 3 malonyl-CoA units. The downstream nonribosomal peptide synthetase (NRPS) module then amidates the carboxyl end of the polyketide with L-malic acid. Because traA lacks a designated enoylreductase (ER) domain, the required activity is provided the enoyl reductase traG. Crustosic acid undergoes decarboxylation and isomerization to the terrestric acid, catalyzed by the 2-oxoglutarate-dependent dioxygenase traH. Both acids are further converted to the 2 gamma-butyrolactones (R)-5-methyltetronic acid and (S)-5-carboxylmethyltetronic acid, with involvement of the cytochrome P450 monooxygenase claJ. Spontaneous addition of the methide to these gamma-butyrolactones leads to peniphenone D and penilactone D, which undergo again stereospecific attacking by methide to give penilactones A and B. The function of claB has not been investigated yet. This chain is Clavatol biosynthesis cluster protein B, found in Penicillium crustosum (Blue mold fungus).